The chain runs to 179 residues: Large ribosomal subunit protein uL6c (179 aa).

It belongs to the universal ribosomal protein uL6 family. As to quaternary structure, part of the 50S ribosomal subunit.

The protein localises to the plastid. The protein resides in the chloroplast. Binds 23S rRNA. The sequence is that of Large ribosomal subunit protein uL6c (rpl6) from Guillardia theta (Cryptophyte).